The chain runs to 283 residues: Shikimate dehydrogenase (NADP(+)) (283 aa).

Residues Ser16–Ser18 and Thr63 contribute to the shikimate site. The Proton acceptor role is filled by Lys67. Asp79 contacts NADP(+). The shikimate site is built by Asn88 and Asp103. Residues Gly128 to Ala132, Ala223, and Gly243 each bind NADP(+).

This sequence belongs to the shikimate dehydrogenase family. As to quaternary structure, homodimer.

The catalysed reaction is shikimate + NADP(+) = 3-dehydroshikimate + NADPH + H(+). It participates in metabolic intermediate biosynthesis; chorismate biosynthesis; chorismate from D-erythrose 4-phosphate and phosphoenolpyruvate: step 4/7. Its function is as follows. Involved in the biosynthesis of the chorismate, which leads to the biosynthesis of aromatic amino acids. Catalyzes the reversible NADPH linked reduction of 3-dehydroshikimate (DHSA) to yield shikimate (SA). This chain is Shikimate dehydrogenase (NADP(+)), found in Xanthomonas campestris pv. campestris (strain B100).